The following is a 400-amino-acid chain: Hyaluronan and proteoglycan link protein 4 (400 aa).

Residues 1–30 form the signal peptide; sequence MACAPGALGHRALWAVAWGLLLLVPVLAGA. One can recognise an Ig-like C2-type domain in the interval 47–155; that stretch reads SVVVQTAPGQ…VTNELEDDVG (109 aa). Intrachain disulfides connect cysteine 69/cysteine 144, cysteine 186/cysteine 264, cysteine 210/cysteine 231, cysteine 291/cysteine 361, and cysteine 316/cysteine 337. An N-linked (GlcNAc...) asparagine glycan is attached at asparagine 133. 2 consecutive Link domains span residues 164–266 and 271–363; these read VVFP…FCFT and GRVF…YCYR.

It belongs to the HAPLN family. As to expression, expressed predominantly in brain where it is found mainly throughout the midbrain and hindbrain in a perineuronal net pattern.

It localises to the secreted. Its subcellular location is the extracellular space. It is found in the extracellular matrix. Functionally, essential for the proper localization of brevican (BCAN), mainly as a perineuronal nets (PNNs)-type deposition in the brainstem and cerebellum thereby playing a key role in the formation and structural organization of PNNs. Contributes to the formation and transmission of inhibitory GABAergic synapses between Purkinje cells and deep cerebellar nuclei neurons. The protein is Hyaluronan and proteoglycan link protein 4 (Hapln4) of Mus musculus (Mouse).